Here is a 175-residue protein sequence, read N- to C-terminus: Large ribosomal subunit protein uL10 (175 aa).

Belongs to the universal ribosomal protein uL10 family. Part of the ribosomal stalk of the 50S ribosomal subunit. The N-terminus interacts with L11 and the large rRNA to form the base of the stalk. The C-terminus forms an elongated spine to which L12 dimers bind in a sequential fashion forming a multimeric L10(L12)X complex.

Its function is as follows. Forms part of the ribosomal stalk, playing a central role in the interaction of the ribosome with GTP-bound translation factors. The chain is Large ribosomal subunit protein uL10 from Methylococcus capsulatus (strain ATCC 33009 / NCIMB 11132 / Bath).